A 316-amino-acid chain; its full sequence is Transaldolase (316 aa).

The Schiff-base intermediate with substrate role is filled by lysine 131.

Belongs to the transaldolase family. Type 1 subfamily. As to quaternary structure, homodimer.

It is found in the cytoplasm. It catalyses the reaction D-sedoheptulose 7-phosphate + D-glyceraldehyde 3-phosphate = D-erythrose 4-phosphate + beta-D-fructose 6-phosphate. It participates in carbohydrate degradation; pentose phosphate pathway; D-glyceraldehyde 3-phosphate and beta-D-fructose 6-phosphate from D-ribose 5-phosphate and D-xylulose 5-phosphate (non-oxidative stage): step 2/3. Transaldolase is important for the balance of metabolites in the pentose-phosphate pathway. The sequence is that of Transaldolase from Glaesserella parasuis serovar 5 (strain SH0165) (Haemophilus parasuis).